Consider the following 336-residue polypeptide: Glycerol-3-phosphate dehydrogenase [NAD(P)+] (336 aa).

Positions 11, 12, 32, 33, and 110 each coordinate NADPH. Lysine 110 and glycine 140 together coordinate sn-glycerol 3-phosphate. Alanine 144 serves as a coordination point for NADPH. The sn-glycerol 3-phosphate site is built by lysine 195, aspartate 248, serine 258, arginine 259, and asparagine 260. Lysine 195 (proton acceptor) is an active-site residue. Arginine 259 is a binding site for NADPH. Residues valine 284 and glutamate 286 each contribute to the NADPH site.

It belongs to the NAD-dependent glycerol-3-phosphate dehydrogenase family.

It is found in the cytoplasm. The enzyme catalyses sn-glycerol 3-phosphate + NAD(+) = dihydroxyacetone phosphate + NADH + H(+). It catalyses the reaction sn-glycerol 3-phosphate + NADP(+) = dihydroxyacetone phosphate + NADPH + H(+). Its pathway is membrane lipid metabolism; glycerophospholipid metabolism. Functionally, catalyzes the reduction of the glycolytic intermediate dihydroxyacetone phosphate (DHAP) to sn-glycerol 3-phosphate (G3P), the key precursor for phospholipid synthesis. The protein is Glycerol-3-phosphate dehydrogenase [NAD(P)+] of Nocardia farcinica (strain IFM 10152).